We begin with the raw amino-acid sequence, 451 residues long: Tubulin alpha-1 chain (451 aa).

Q11 serves as a coordination point for GTP. K40 is modified (N6-acetyllysine). Residues E71, T145, T179, N206, and N228 each contribute to the GTP site. Position 71 (E71) interacts with Mg(2+). The active site involves E254. The disordered stretch occupies residues 429–451 (EKDYEEVGAESGEGEEGDEGEEY). Residues 431-451 (DYEEVGAESGEGEEGDEGEEY) are compositionally biased toward acidic residues.

It belongs to the tubulin family. As to quaternary structure, dimer of alpha and beta chains. A typical microtubule is a hollow water-filled tube with an outer diameter of 25 nm and an inner diameter of 15 nM. Alpha-beta heterodimers associate head-to-tail to form protofilaments running lengthwise along the microtubule wall with the beta-tubulin subunit facing the microtubule plus end conferring a structural polarity. Microtubules usually have 13 protofilaments but different protofilament numbers can be found in some organisms and specialized cells. Requires Mg(2+) as cofactor. Undergoes a tyrosination/detyrosination cycle, the cyclic removal and re-addition of a C-terminal tyrosine residue by the enzymes tubulin tyrosine carboxypeptidase (TTCP) and tubulin tyrosine ligase (TTL), respectively. In terms of processing, acetylation of alpha chains at Lys-40 stabilizes microtubules and affects affinity and processivity of microtubule motors. This modification has a role in multiple cellular functions, ranging from cell motility, cell cycle progression or cell differentiation to intracellular trafficking and signaling.

The protein resides in the cytoplasm. Its subcellular location is the cytoskeleton. It catalyses the reaction GTP + H2O = GDP + phosphate + H(+). In terms of biological role, tubulin is the major constituent of microtubules, a cylinder consisting of laterally associated linear protofilaments composed of alpha- and beta-tubulin heterodimers. Microtubules grow by the addition of GTP-tubulin dimers to the microtubule end, where a stabilizing cap forms. Below the cap, tubulin dimers are in GDP-bound state, owing to GTPase activity of alpha-tubulin. In Anemia phyllitidis (Fern), this protein is Tubulin alpha-1 chain (TUBA1).